Reading from the N-terminus, the 378-residue chain is Signal recognition particle receptor FtsY (378 aa).

GTP-binding positions include 184 to 191 (GVNGTGKT), 266 to 270 (DTAGR), and 330 to 333 (TKLD).

It belongs to the GTP-binding SRP family. FtsY subfamily. As to quaternary structure, part of the signal recognition particle protein translocation system, which is composed of SRP and FtsY. SRP is a ribonucleoprotein composed of Ffh and a 4.5S RNA molecule.

It is found in the cell membrane. The protein localises to the cytoplasm. The enzyme catalyses GTP + H2O = GDP + phosphate + H(+). In terms of biological role, involved in targeting and insertion of nascent membrane proteins into the cytoplasmic membrane. Acts as a receptor for the complex formed by the signal recognition particle (SRP) and the ribosome-nascent chain (RNC). Interaction with SRP-RNC leads to the transfer of the RNC complex to the Sec translocase for insertion into the membrane, the hydrolysis of GTP by both Ffh and FtsY, and the dissociation of the SRP-FtsY complex into the individual components. The chain is Signal recognition particle receptor FtsY from Buchnera aphidicola subsp. Acyrthosiphon pisum (strain APS) (Acyrthosiphon pisum symbiotic bacterium).